Here is a 926-residue protein sequence, read N- to C-terminus: MNRRDFIKSAAASAACASAGIAIPANLSAASEAEKGWRWDKAACRFCGTGCGIMVATKEGKIVAVKGDPEAPVNRGLNCIKGYFNAKIMYGEDRITHPLLRVNEKGEFDKKGKFKQVSWKQAFDVMEAQFRKTYDELGPHGVGVLGSGQYTIPEGYTAAKMMKAGFRSNSIDPNARHCMASAVVGFIQVFGIDEPSGCFDDIELTDTIVAWGANMAEMHPILWARVSDRKLSNPDRVKVVNLSTYSTRTSNLADIEIIFAPSADLAIWNYIAREIVYNHPEMIDEEFVKKHCIFTTGPADIGYGLRPDIKYKKYLSSELDTAATEKSKVLSEAEGVTLSYLGLKAGDTMENKNTATAGNHWHISFEEFKKALAPYTLEFTAKVAKGDPNEDIEEFKGKLKALADLYIEKNRKVVSFWTMGFNQHQRGTWVNEQAYMVHFLLGKQALPGSGAFSLTGQPSACGTAREVGTFVHRLPADMVVNNPKHREISEKIWKLPAGTLNGIPGSHYVKMMRDLEDGKVKFIWVQVNNPWQNTANANHWIKAAREMDNFIVVSDPYPGISAKVADLILPTAMIYEKWGAYGNAERRTQHWRQQVLPVGEAMPDIWQMLEFSKRFKLKDVWGEKKLNDKVTLPSVLDAAKAMGYSEEDTLFDVLFANEEAKSYPANDPIMENFDNTEVFGDKRGVIGSDGKEFKGYGFFVHKYLWEEYRKFGLGHGHDLADFDTYHRVRGLRWPVVDGKETQWRFNTKFDPYAKKAAPNDKFAFYGNKAAALPSGDLKGVTDKEKTPLTNKAKIFFRPYMDPCEMPSSEYPFWLCTGRVLEHWHSGTMTMRVPELYRAVPEALCYMHEQDAAKLGVLQNEIVWIESRRGKVKARVDLKGRNKPPVGLVYVPWFDENVFINKVTLDSTCPISKETDYKKCAVKIYKA.

Positions 1 to 30 (MNRRDFIKSAAASAACASAGIAIPANLSAA) form a signal peptide, tat-type signal. In terms of domain architecture, 4Fe-4S Mo/W bis-MGD-type spans 37–93 (WRWDKAACRFCGTGCGIMVATKEGKIVAVKGDPEAPVNRGLNCIKGYFNAKIMYGED). Residues Cys44, Cys47, Cys51, and Cys79 each coordinate [4Fe-4S] cluster. Residues Lys81, Gln149, Asn174, Cys178, 211 to 218 (WGANMAEM), Met419, Gln423, Asn529, 554 to 555 (SD), Lys577, Asp604, and 816 to 825 (TGRVLEHWHS) each bind Mo-bis(molybdopterin guanine dinucleotide). Trp892 is a binding site for substrate. Positions 900 and 917 each coordinate Mo-bis(molybdopterin guanine dinucleotide).

Belongs to the prokaryotic molybdopterin-containing oxidoreductase family. NasA/NapA/NarB subfamily. Component of the periplasmic nitrate reductase NapAB complex composed of NapA and NapB. The cofactor is [4Fe-4S] cluster. Mo-bis(molybdopterin guanine dinucleotide) serves as cofactor. In terms of processing, predicted to be exported by the Tat system. The position of the signal peptide cleavage has not been experimentally proven.

Its subcellular location is the periplasm. It carries out the reaction 2 Fe(II)-[cytochrome] + nitrate + 2 H(+) = 2 Fe(III)-[cytochrome] + nitrite + H2O. Functionally, catalytic subunit of the periplasmic nitrate reductase complex NapAB. Receives electrons from NapB and catalyzes the reduction of nitrate to nitrite. The protein is Periplasmic nitrate reductase of Campylobacter curvus (strain 525.92).